A 606-amino-acid chain; its full sequence is Kelch-like protein 26 (606 aa).

Over residues 1 to 19 the composition is skewed to low complexity; that stretch reads MAESGGSSGSSQSPERPSS. The tract at residues 1 to 20 is disordered; sequence MAESGGSSGSSQSPERPSSL. The residue at position 2 (A2) is an N-acetylalanine. In terms of domain architecture, BTB spans 54–121; sequence LDVVLTVNSE…AYSAEVTLDL (68 aa). A BACK domain is found at 156 to 257; it reads CLHIGQMATT…QPAELVDSVQ (102 aa). Kelch repeat units follow at residues 301 to 352, 353 to 404, 406 to 451, 452 to 499, 501 to 550, and 552 to 599; these read SLVA…VLDN, FVYV…ALGG, LYAT…AAAG, RLYI…GAAG, IYAL…LLER, and IYIV…AVLL. Residue S430 is modified to Phosphoserine.

May play a role in endo(sarco)plasmic reticulum (ER/SR) mitochondrial signaling. May be part of the ubiquitin-proteasome system (UPS) and affect ubiquitination and degradation of target substrates in cardiomyocytes. This chain is Kelch-like protein 26 (Klhl26), found in Mus musculus (Mouse).